Here is a 349-residue protein sequence, read N- to C-terminus: PDZ and LIM domain protein 2 (349 aa).

The PDZ domain maps to 1–84 (MALTVDVAGP…PLRLQLDRSQ (84 aa)). Positions 74 to 147 (SPLRLQLDRS…TPPPTSPVAL (74 aa)) are disordered. The segment covering 81–94 (DRSQTASPGQTNGE) has biased composition (polar residues). Ser-124, Ser-127, Ser-129, Ser-134, and Ser-137 each carry phosphoserine. Phosphothreonine occurs at positions 138 and 142. Phosphoserine is present on residues Ser-143 and Ser-163. The disordered stretch occupies residues 169 to 212 (AHHLTYPGHPTSQQAGHSSPSDSAVRVLLHSPGRPSSPRFSSLD). A compositionally biased stretch (polar residues) spans 178 to 190 (PTSQQAGHSSPSD). A phosphoserine mark is found at Ser-199, Ser-204, Ser-205, Ser-209, Ser-210, and Ser-263. Positions 199–210 (SPGRPSSPRFSS) are enriched in low complexity. The 61-residue stretch at 281-341 (HTCEKCSVNI…EKHARQRYSM (61 aa)) folds into the LIM zinc-binding domain.

In terms of assembly, interacts with alpha-actinins ACTN1 and ACTN4, FLNA and MYH9. Interacts (via LIM zinc-binding domain) with MKRN2. In terms of tissue distribution, highly expressed in lung. Expressed at intermediate level in kidney, testis and spleen. Weakly expressed in heart and brain.

Its subcellular location is the cytoplasm. The protein resides in the cytoskeleton. Functionally, probable adapter protein located at the actin cytoskeleton that promotes cell attachment. Necessary for the migratory capacity of epithelial cells. Overexpression enhances cell adhesion to collagen and fibronectin and suppresses anchorage independent growth. May contribute to tumor cell migratory capacity. The protein is PDZ and LIM domain protein 2 (Pdlim2) of Mus musculus (Mouse).